The following is a 488-amino-acid chain: UDP-N-acetylmuramoyl-L-alanyl-D-glutamate--2,6-diaminopimelate ligase (488 aa).

UDP-N-acetyl-alpha-D-muramoyl-L-alanyl-D-glutamate is bound by residues L24, S26, and 41-43 (HQV). ATP is bound at residue 113 to 119 (GTNGKTT). UDP-N-acetyl-alpha-D-muramoyl-L-alanyl-D-glutamate is bound by residues N154, 155-156 (TT), S182, Q188, and R190. K222 bears the N6-carboxylysine mark. Meso-2,6-diaminopimelate is bound by residues R386, 410–413 (DNPR), G461, and E465. A Meso-diaminopimelate recognition motif motif is present at residues 410–413 (DNPR).

This sequence belongs to the MurCDEF family. MurE subfamily. Mg(2+) is required as a cofactor. In terms of processing, carboxylation is probably crucial for Mg(2+) binding and, consequently, for the gamma-phosphate positioning of ATP.

Its subcellular location is the cytoplasm. It catalyses the reaction UDP-N-acetyl-alpha-D-muramoyl-L-alanyl-D-glutamate + meso-2,6-diaminopimelate + ATP = UDP-N-acetyl-alpha-D-muramoyl-L-alanyl-gamma-D-glutamyl-meso-2,6-diaminopimelate + ADP + phosphate + H(+). Its pathway is cell wall biogenesis; peptidoglycan biosynthesis. Its function is as follows. Catalyzes the addition of meso-diaminopimelic acid to the nucleotide precursor UDP-N-acetylmuramoyl-L-alanyl-D-glutamate (UMAG) in the biosynthesis of bacterial cell-wall peptidoglycan. The chain is UDP-N-acetylmuramoyl-L-alanyl-D-glutamate--2,6-diaminopimelate ligase from Haemophilus influenzae (strain ATCC 51907 / DSM 11121 / KW20 / Rd).